Reading from the N-terminus, the 592-residue chain is Arginine--tRNA ligase (592 aa).

A 'HIGH' region motif is present at residues 139–149 (ANPNGPLHIGH).

This sequence belongs to the class-I aminoacyl-tRNA synthetase family.

It is found in the cytoplasm. The enzyme catalyses tRNA(Arg) + L-arginine + ATP = L-arginyl-tRNA(Arg) + AMP + diphosphate. The chain is Arginine--tRNA ligase from Methanopyrus kandleri (strain AV19 / DSM 6324 / JCM 9639 / NBRC 100938).